Here is a 647-residue protein sequence, read N- to C-terminus: Macrolide export ATP-binding/permease protein MacB (647 aa).

The ABC transporter domain occupies 5-243 (LELKGIERSY…TQTPSLTSKI (239 aa)). Residue 41 to 48 (GASGSGKS) coordinates ATP. The next 4 helical transmembrane spans lie at 272–292 (LLTM…LVIG), 522–542 (LFLT…VMNI), 576–596 (ILVC…IAFI), and 610–630 (PIAL…FGFL).

This sequence belongs to the ABC transporter superfamily. Macrolide exporter (TC 3.A.1.122) family. Homodimer. Part of the tripartite efflux system MacAB-TolC, which is composed of an inner membrane transporter, MacB, a periplasmic membrane fusion protein, MacA, and an outer membrane component, TolC. The complex forms a large protein conduit and can translocate molecules across both the inner and outer membranes. Interacts with MacA.

The protein resides in the cell inner membrane. Its function is as follows. Part of the tripartite efflux system MacAB-TolC. MacB is a non-canonical ABC transporter that contains transmembrane domains (TMD), which form a pore in the inner membrane, and an ATP-binding domain (NBD), which is responsible for energy generation. Confers resistance against macrolides. The chain is Macrolide export ATP-binding/permease protein MacB from Photorhabdus laumondii subsp. laumondii (strain DSM 15139 / CIP 105565 / TT01) (Photorhabdus luminescens subsp. laumondii).